Reading from the N-terminus, the 144-residue chain is Large ribosomal subunit protein uL16 (144 aa).

It belongs to the universal ribosomal protein uL16 family. In terms of assembly, part of the 50S ribosomal subunit.

Binds 23S rRNA and is also seen to make contacts with the A and possibly P site tRNAs. The protein is Large ribosomal subunit protein uL16 of Clostridium botulinum (strain Alaska E43 / Type E3).